The following is a 206-amino-acid chain: Large ribosomal subunit protein uL4 (206 aa).

The tract at residues 62–85 (KPWRQKGTGRARQGSTRSPQFRGG) is disordered.

The protein belongs to the universal ribosomal protein uL4 family. In terms of assembly, part of the 50S ribosomal subunit.

In terms of biological role, one of the primary rRNA binding proteins, this protein initially binds near the 5'-end of the 23S rRNA. It is important during the early stages of 50S assembly. It makes multiple contacts with different domains of the 23S rRNA in the assembled 50S subunit and ribosome. Its function is as follows. Forms part of the polypeptide exit tunnel. The polypeptide is Large ribosomal subunit protein uL4 (Rhodospirillum centenum (strain ATCC 51521 / SW)).